The following is a 1169-amino-acid chain: Pesticidal crystal protein Cry1Fb (1169 aa).

It belongs to the delta endotoxin family.

Promotes colloidosmotic lysis by binding to the midgut epithelial cells of insects. The sequence is that of Pesticidal crystal protein Cry1Fb (cry1Fb) from Bacillus thuringiensis subsp. morrisoni.